Reading from the N-terminus, the 329-residue chain is Phenylalanine--tRNA ligase alpha subunit (329 aa).

A Mg(2+)-binding site is contributed by Glu253.

It belongs to the class-II aminoacyl-tRNA synthetase family. Phe-tRNA synthetase alpha subunit type 1 subfamily. Tetramer of two alpha and two beta subunits. Mg(2+) serves as cofactor.

It is found in the cytoplasm. It carries out the reaction tRNA(Phe) + L-phenylalanine + ATP = L-phenylalanyl-tRNA(Phe) + AMP + diphosphate + H(+). The polypeptide is Phenylalanine--tRNA ligase alpha subunit (Teredinibacter turnerae (strain ATCC 39867 / T7901)).